Consider the following 506-residue polypeptide: MLSLLSTPRLVPVIARLRGLSGCMSCLQRRYSLQPVPVKEIPNRYLGQPSPVTHPHLLRPGEVTPGLSQVEYALRRHKLMALVHKEAQGHSGTDHTVVVLSNPIHYMSNDIPYTFHQDNSFLYLCGFQEPDSILVLQSCSGKQLPSHKAMLFVPRRDPGRELWDGPRSGTDGAIALTGVDDAYPLEEFQHLLPKLRAETNMVWYDWMKPSHAQLHSDYMQPLTEAKATSKNKVRSVQHLIQHLRLIKSPAEIKRMQIAGKLTSEAFIETMFASKAPVDEAFLYAKFEFECRARGADILAYPPVVAGGNRSNTLHYVKNNQLIKDGEMVLLDGGCESSCYVSDITRTWPVNGRFTAPQAELYEAVLEIQKACLTLCSPGTSLENIYSMMLTLMGQKLKDLGIIKTSKESAFKAARKYCPHHVGHYLGMDVHDTPDMPRSLPLQPGMVITVEPGIYIPEGDTDAPEKFRGLGVRIEDDVVVTQDSPLILSADCPKEVNDIEQICSRTS.

The N-terminal 31 residues, 1–31 (MLSLLSTPRLVPVIARLRGLSGCMSCLQRRY), are a transit peptide targeting the mitochondrion. The interval 54-79 (HPHLLRPGEVTPGLSQVEYALRRHKL) is interaction with TNFRSF1B. 7 residues coordinate substrate: Y300, D331, D342, H423, H430, E450, and E474. Mn(2+) contacts are provided by D331, D342, and H423. Mn(2+) contacts are provided by E450 and E474.

The protein belongs to the peptidase M24B family. In terms of assembly, homodimer. Interacts with TNFRSF1B/TNFR2 (activated) and TRAF2. The cofactor is Mn(2+). Expressed in the kidney, specifically in intercalated cells, but not in principal cells, of the distal convoluted tubule and cortical collecting duct (at protein level).

It localises to the mitochondrion. It is found in the cytoplasm. It carries out the reaction Release of any N-terminal amino acid, including proline, that is linked to proline, even from a dipeptide or tripeptide.. In terms of biological role, catalyzes the removal of a penultimate prolyl residue from the N-termini of peptides, such as Leu-Pro-Ala. Also shows low activity towards peptides with Ala or Ser at the P1 position. Promotes TNFRSF1B-mediated phosphorylation of MAPK8/JNK1 and MAPK9/JNK2, suggesting a function as an adapter protein for TNFRSF1B; the effect is independent of XPNPEP3 peptidase activity. May inhibit apoptotic cell death induced via TNF-TNFRSF1B signaling. This is Xaa-Pro aminopeptidase 3 (Xpnpep3) from Rattus norvegicus (Rat).